A 460-amino-acid polypeptide reads, in one-letter code: MEMYFKRMKDEWTGLVEQADPLIRAKAAEIAVAHAHYLSIEFYRIVRIDPHAEEFLSNEQVERQLKSAMERWIINVLSAQVDDVERLIQIQHTVAEVHARIGIPVEIVEMGFRVLKKILYPVIFSSDYSAAEKLQVYHFSINSIDIAMEVMTRAFTFSDSSASKEDENYRIFSLLENAEEEKERQIASILSWEIDIIYKILLDSDLGSSLPLSQADFGLWFNHKGRHYFSGIAEVGHISRLIQDFDGIFNQTMRNTRNLNNRSLRVKFLLQIRNTVSQIITLLRELFEEVSRHEVGMDVLTKLLNRRFLPTIFKREIAHANRTGTPLSVLIIDVDKFKEINDTWGHNTGDEILRKVSQAFYDNVHSSDYVFRYGGDEFIIVLTEASENETLRTAERIRSRVEKTKLKAANGEDIALSLSIGAAMFNGHPDYERLIQIADEALYIAKRRGRNRVELWKASL.

Histidine 98 contributes to the heme binding site. One can recognise a GGDEF domain in the interval 325–458; that stretch reads TPLSVLIIDV…GRNRVELWKA (134 aa). Aspartate 333 contacts Mg(2+). Residues asparagine 341 and aspartate 350 each contribute to the substrate site. Aspartate 376 contacts Mg(2+). Residue aspartate 376 is the Proton acceptor of the active site.

It depends on heme as a cofactor. Mg(2+) serves as cofactor.

The catalysed reaction is 2 GTP = 3',3'-c-di-GMP + 2 diphosphate. The protein operates within purine metabolism; 3',5'-cyclic di-GMP biosynthesis. Globin-coupled heme-based oxygen sensor protein displaying diguanylate cyclase (DGC) activity in response to oxygen availability. Thus, catalyzes the synthesis of cyclic diguanylate (c-di-GMP) via the condensation of 2 GTP molecules. Cyclic-di-GMP is a second messenger which controls cell surface-associated traits in bacteria. This is Diguanylate cyclase DosC (dosC) from Shigella sonnei (strain Ss046).